Consider the following 147-residue polypeptide: MSQTRDLQGGKAFGLLKAQQEERLDEINKQFLDDPKYSSDEDLPSKLEGFKEKYMEFDLNGNGDIDIMSLKRMLEKLGVPKTHLELKKLIGEVSSGSGETFSYPDFLRMMLGKRSAILKMILMYEEKAREKEKPTGPPAKKAISELP.

Serine 2 carries the N-acetylserine modification. Lysine 11 is modified (N6-acetyllysine). At serine 39 the chain carries Phosphoserine. One can recognise an EF-hand 1 domain in the interval 45-80; it reads SKLEGFKEKYMEFDLNGNGDIDIMSLKRMLEKLGVP. Residues aspartate 58, asparagine 60, asparagine 62, aspartate 64, threonine 100, and aspartate 105 each contribute to the Ca(2+) site. One can recognise an EF-hand 2; degenerate domain in the interval 81-115; it reads KTHLELKKLIGEVSSGSGETFSYPDFLRMMLGKRS. The segment at 128–147 is disordered; sequence AREKEKPTGPPAKKAISELP.

Homodimer (Potential). Monomer. Interacts with LCP1. Post-translationally, phosphorylated on serine residues. As to expression, detected in T-lymphocytes and peripheral blood mononuclear cells.

The protein localises to the cytoplasm. Its subcellular location is the cytoskeleton. It localises to the cell projection. It is found in the ruffle membrane. The protein resides in the phagocytic cup. In terms of biological role, actin-binding protein that enhances membrane ruffling and RAC activation. Enhances the actin-bundling activity of LCP1. Binds calcium. Plays a role in RAC signaling and in phagocytosis. May play a role in macrophage activation and function. Promotes the proliferation of vascular smooth muscle cells and of T-lymphocytes. Enhances lymphocyte migration. Plays a role in vascular inflammation. This Homo sapiens (Human) protein is Allograft inflammatory factor 1 (AIF1).